The following is a 493-amino-acid chain: Cysteine--tRNA ligase (493 aa).

C31 contacts Zn(2+). A 'HIGH' region motif is present at residues 33–43; that stretch reads PTVYGDAHLGH. Zn(2+)-binding residues include C226, H251, and E255. Positions 283-287 match the 'KMSKS' region motif; that stretch reads KMGKS. ATP is bound at residue K286.

Belongs to the class-I aminoacyl-tRNA synthetase family. As to quaternary structure, monomer. Zn(2+) serves as cofactor.

The protein localises to the cytoplasm. It catalyses the reaction tRNA(Cys) + L-cysteine + ATP = L-cysteinyl-tRNA(Cys) + AMP + diphosphate. The protein is Cysteine--tRNA ligase of Bacteroides thetaiotaomicron (strain ATCC 29148 / DSM 2079 / JCM 5827 / CCUG 10774 / NCTC 10582 / VPI-5482 / E50).